The chain runs to 274 residues: Acetyl-coenzyme A carboxylase carboxyl transferase subunit beta (274 aa).

The region spanning 18-274 (IWTKCKKCDY…FYNRQCFLKF (257 aa)) is the CoA carboxyltransferase N-terminal domain. 4 residues coordinate Zn(2+): Cys22, Cys25, Cys41, and Cys44. The C4-type zinc-finger motif lies at 22–44 (CKKCDYILLQKDFEENLMVCPKC).

It belongs to the AccD/PCCB family. Acetyl-CoA carboxylase is a heterohexamer composed of biotin carboxyl carrier protein (AccB), biotin carboxylase (AccC) and two subunits each of ACCase subunit alpha (AccA) and ACCase subunit beta (AccD). The cofactor is Zn(2+).

It localises to the cytoplasm. It catalyses the reaction N(6)-carboxybiotinyl-L-lysyl-[protein] + acetyl-CoA = N(6)-biotinyl-L-lysyl-[protein] + malonyl-CoA. The protein operates within lipid metabolism; malonyl-CoA biosynthesis; malonyl-CoA from acetyl-CoA: step 1/1. Functionally, component of the acetyl coenzyme A carboxylase (ACC) complex. Biotin carboxylase (BC) catalyzes the carboxylation of biotin on its carrier protein (BCCP) and then the CO(2) group is transferred by the transcarboxylase to acetyl-CoA to form malonyl-CoA. The chain is Acetyl-coenzyme A carboxylase carboxyl transferase subunit beta from Endomicrobium trichonymphae.